The primary structure comprises 302 residues: Sulfate adenylyltransferase subunit 2 (302 aa).

It belongs to the PAPS reductase family. CysD subfamily. In terms of assembly, heterodimer composed of CysD, the smaller subunit, and CysN.

It catalyses the reaction sulfate + ATP + H(+) = adenosine 5'-phosphosulfate + diphosphate. It participates in sulfur metabolism; hydrogen sulfide biosynthesis; sulfite from sulfate: step 1/3. With CysN forms the ATP sulfurylase (ATPS) that catalyzes the adenylation of sulfate producing adenosine 5'-phosphosulfate (APS) and diphosphate, the first enzymatic step in sulfur assimilation pathway. APS synthesis involves the formation of a high-energy phosphoric-sulfuric acid anhydride bond driven by GTP hydrolysis by CysN coupled to ATP hydrolysis by CysD. The polypeptide is Sulfate adenylyltransferase subunit 2 (Salmonella arizonae (strain ATCC BAA-731 / CDC346-86 / RSK2980)).